Consider the following 213-residue polypeptide: Regulatory protein RecX (213 aa).

This sequence belongs to the RecX family.

Its subcellular location is the cytoplasm. In terms of biological role, modulates RecA activity. This Clostridium beijerinckii (strain ATCC 51743 / NCIMB 8052) (Clostridium acetobutylicum) protein is Regulatory protein RecX.